The sequence spans 162 residues: Dihydrofolate reductase (162 aa).

Residues 3–161 form the DHFR domain; the sequence is KITLIAACAE…TRYAFVHYLR (159 aa). 7–9 serves as a coordination point for substrate; it reads IAA. NADP(+) contacts are provided by residues 8 to 9 and 16 to 21; these read AA and IGAGNA. Position 29 (D29) interacts with substrate. 45–48 provides a ligand contact to NADP(+); sequence GRKT. Residue R60 coordinates substrate. NADP(+)-binding positions include 65 to 68 and 98 to 103; these read ISRQ and MGGAQI. Substrate is bound at residue T117.

The protein belongs to the dihydrofolate reductase family.

The enzyme catalyses (6S)-5,6,7,8-tetrahydrofolate + NADP(+) = 7,8-dihydrofolate + NADPH + H(+). It participates in cofactor biosynthesis; tetrahydrofolate biosynthesis; 5,6,7,8-tetrahydrofolate from 7,8-dihydrofolate: step 1/1. In terms of biological role, key enzyme in folate metabolism. Catalyzes an essential reaction for de novo glycine and purine synthesis, and for DNA precursor synthesis. This is Dihydrofolate reductase (folA) from Neisseria meningitidis serogroup B (strain ATCC BAA-335 / MC58).